Here is a 103-residue protein sequence, read N- to C-terminus: Large ribosomal subunit protein bL21 (103 aa).

It belongs to the bacterial ribosomal protein bL21 family. Part of the 50S ribosomal subunit. Contacts protein L20.

In terms of biological role, this protein binds to 23S rRNA in the presence of protein L20. This is Large ribosomal subunit protein bL21 from Shewanella sp. (strain MR-7).